The chain runs to 133 residues: ATP synthase epsilon chain, chloroplastic (133 aa).

It belongs to the ATPase epsilon chain family. As to quaternary structure, F-type ATPases have 2 components, CF(1) - the catalytic core - and CF(0) - the membrane proton channel. CF(1) has five subunits: alpha(3), beta(3), gamma(1), delta(1), epsilon(1). CF(0) has three main subunits: a, b and c.

It is found in the plastid. It localises to the chloroplast thylakoid membrane. Functionally, produces ATP from ADP in the presence of a proton gradient across the membrane. The chain is ATP synthase epsilon chain, chloroplastic from Piper cenocladum (Ant piper).